We begin with the raw amino-acid sequence, 345 residues long: Biotin synthase (345 aa).

A Radical SAM core domain is found at 60-287 (NQVQLSTLLS…RTMVRLSAGR (228 aa)). [4Fe-4S] cluster-binding residues include Cys-75, Cys-79, and Cys-82. [2Fe-2S] cluster-binding residues include Cys-119, Cys-150, Cys-210, and Arg-282.

Belongs to the radical SAM superfamily. Biotin synthase family. Homodimer. The cofactor is [4Fe-4S] cluster. [2Fe-2S] cluster serves as cofactor.

The enzyme catalyses (4R,5S)-dethiobiotin + (sulfur carrier)-SH + 2 reduced [2Fe-2S]-[ferredoxin] + 2 S-adenosyl-L-methionine = (sulfur carrier)-H + biotin + 2 5'-deoxyadenosine + 2 L-methionine + 2 oxidized [2Fe-2S]-[ferredoxin]. Its pathway is cofactor biosynthesis; biotin biosynthesis; biotin from 7,8-diaminononanoate: step 2/2. Catalyzes the conversion of dethiobiotin (DTB) to biotin by the insertion of a sulfur atom into dethiobiotin via a radical-based mechanism. The polypeptide is Biotin synthase (Polaromonas naphthalenivorans (strain CJ2)).